A 194-amino-acid chain; its full sequence is Cytochrome bo(3) ubiquinol oxidase subunit 3 (194 aa).

Residues 1–18 (MKKKYKIDTNIFSKELLG) are Cytoplasmic-facing. Residues 19–41 (FWLYLMSDCIIFCTLFSVYFILV) form a helical membrane-spanning segment. The Extracellular portion of the chain corresponds to 42–55 (DNVAQGPSGHNIFQ). The helical transmembrane segment at 56-78 (NNLIIIETFLLLFSSFSCNLVLF) threads the bilayer. Residues 79–84 (EMKNKN) are Cytoplasmic-facing. A helical membrane pass occupies residues 85–107 (LYMVFLWLGITFLLGLLFVFLEL). Topologically, residues 108-126 (FEFFHLINLGFGPTRSGFL) are extracellular. The helical transmembrane segment at 127–149 (SSFFVLIATHGIHVISGLIWIIV) threads the bilayer. Topologically, residues 150–169 (MIKYVYTFNITNLIYYRMLC) are cytoplasmic. The chain crosses the membrane as a helical span at residues 170–192 (LNLFWHFLDIVWVFIFSFVYLFG). Residues 193–194 (MV) are Extracellular-facing.

This sequence belongs to the cytochrome c oxidase subunit 3 family. As to quaternary structure, heterooctamer of two A chains, two B chains, two C chains and two D chains.

Its subcellular location is the cell membrane. Functionally, cytochrome bo(3) ubiquinol terminal oxidase is the component of the aerobic respiratory chain of E.coli that predominates when cells are grown at high aeration. Has proton pump activity across the membrane in addition to electron transfer, pumping 2 protons/electron. This Buchnera aphidicola subsp. Baizongia pistaciae (strain Bp) protein is Cytochrome bo(3) ubiquinol oxidase subunit 3 (cyoC).